Here is a 252-residue protein sequence, read N- to C-terminus: 5-oxoprolinase subunit A (252 aa).

Belongs to the LamB/PxpA family. As to quaternary structure, forms a complex composed of PxpA, PxpB and PxpC.

It carries out the reaction 5-oxo-L-proline + ATP + 2 H2O = L-glutamate + ADP + phosphate + H(+). Catalyzes the cleavage of 5-oxoproline to form L-glutamate coupled to the hydrolysis of ATP to ADP and inorganic phosphate. The polypeptide is 5-oxoprolinase subunit A (Photorhabdus laumondii subsp. laumondii (strain DSM 15139 / CIP 105565 / TT01) (Photorhabdus luminescens subsp. laumondii)).